A 132-amino-acid chain; its full sequence is Small ribosomal subunit protein uS8 (132 aa).

Belongs to the universal ribosomal protein uS8 family. As to quaternary structure, part of the 30S ribosomal subunit. Contacts proteins S5 and S12.

In terms of biological role, one of the primary rRNA binding proteins, it binds directly to 16S rRNA central domain where it helps coordinate assembly of the platform of the 30S subunit. The polypeptide is Small ribosomal subunit protein uS8 (Corynebacterium glutamicum (strain R)).